A 185-amino-acid chain; its full sequence is ATP synthase subunit b (185 aa).

A helical transmembrane segment spans residues 28-48; the sequence is VVLVGFAVLMYIVVKFVVPMF.

It belongs to the ATPase B chain family. F-type ATPases have 2 components, F(1) - the catalytic core - and F(0) - the membrane proton channel. F(1) has five subunits: alpha(3), beta(3), gamma(1), delta(1), epsilon(1). F(0) has three main subunits: a(1), b(2) and c(10-14). The alpha and beta chains form an alternating ring which encloses part of the gamma chain. F(1) is attached to F(0) by a central stalk formed by the gamma and epsilon chains, while a peripheral stalk is formed by the delta and b chains.

It localises to the cell membrane. Functionally, f(1)F(0) ATP synthase produces ATP from ADP in the presence of a proton or sodium gradient. F-type ATPases consist of two structural domains, F(1) containing the extramembraneous catalytic core and F(0) containing the membrane proton channel, linked together by a central stalk and a peripheral stalk. During catalysis, ATP synthesis in the catalytic domain of F(1) is coupled via a rotary mechanism of the central stalk subunits to proton translocation. Its function is as follows. Component of the F(0) channel, it forms part of the peripheral stalk, linking F(1) to F(0). The protein is ATP synthase subunit b of Paenarthrobacter aurescens (strain TC1).